The following is a 95-amino-acid chain: UPF0381 protein HI_0400 (95 aa).

This sequence belongs to the UPF0381 family.

This is UPF0381 protein HI_0400 from Haemophilus influenzae (strain ATCC 51907 / DSM 11121 / KW20 / Rd).